Reading from the N-terminus, the 259-residue chain is Ribonuclease HII (259 aa).

In terms of domain architecture, RNase H type-2 spans 70–258 (TLIAGIDEVG…VKSLVLGKKE (189 aa)). Positions 76, 77, and 168 each coordinate a divalent metal cation.

This sequence belongs to the RNase HII family. Mn(2+) serves as cofactor. Mg(2+) is required as a cofactor.

The protein resides in the cytoplasm. The enzyme catalyses Endonucleolytic cleavage to 5'-phosphomonoester.. In terms of biological role, endonuclease that specifically degrades the RNA of RNA-DNA hybrids. This is Ribonuclease HII from Streptococcus pneumoniae (strain Taiwan19F-14).